A 426-amino-acid polypeptide reads, in one-letter code: Dihydroorotase (426 aa).

Zn(2+) contacts are provided by histidine 58 and histidine 60. Residues 60-62 (HLR) and asparagine 92 contribute to the substrate site. Residues aspartate 150, histidine 177, and histidine 230 each coordinate Zn(2+). A substrate-binding site is contributed by asparagine 276. Position 303 (aspartate 303) interacts with Zn(2+). The active site involves aspartate 303. Residues histidine 307 and 321–322 (FG) contribute to the substrate site.

It belongs to the metallo-dependent hydrolases superfamily. DHOase family. Class I DHOase subfamily. It depends on Zn(2+) as a cofactor.

It carries out the reaction (S)-dihydroorotate + H2O = N-carbamoyl-L-aspartate + H(+). The protein operates within pyrimidine metabolism; UMP biosynthesis via de novo pathway; (S)-dihydroorotate from bicarbonate: step 3/3. Catalyzes the reversible cyclization of carbamoyl aspartate to dihydroorotate. The polypeptide is Dihydroorotase (Listeria innocua serovar 6a (strain ATCC BAA-680 / CLIP 11262)).